The following is a 111-amino-acid chain: Denmotoxin (111 aa).

An N-terminal signal peptide occupies residues 1 to 19; the sequence is MKTLLLAVAVVAFVCLGSA. Positions 20–34 are excised as a propeptide; the sequence is DQLGLGRQQIDWGQG. Q35 carries the post-translational modification Pyrrolidone carboxylic acid. 5 disulfides stabilise this stretch: C44/C68, C47/C55, C61/C87, C91/C102, and C103/C108.

As to quaternary structure, monomer. As to expression, expressed by the venom gland.

The protein localises to the secreted. This bird-specific postsynaptic neurotoxin irreversibly binds and inhibits the chick muscle alpha-1-beta-1-gamma-delta (CHRNA1-CHRNB1-CHRNG-CHNRD) nicotinic acetylcholine receptor (nAChR) 100-fold more compared with the mouse receptor. The weak binding to mouse receptor is reversible. In Boiga dendrophila (Mangrove snake), this protein is Denmotoxin.